A 1220-amino-acid polypeptide reads, in one-letter code: Deubiquitinating protein VCPIP1 (1220 aa).

The segment covering M1–A19 has biased composition (pro residues). Residues M1–D40 are disordered. A compositionally biased stretch (low complexity) spans P20–L35. The region spanning L207–I360 is the OTU domain. D215 is an active-site residue. C218 acts as the Nucleophile in catalysis. H353 is a catalytic residue. Residue K407 is modified to N6-acetyllysine. Disordered stretches follow at residues S724–I778 and E988–G1008. 2 positions are modified to phosphoserine: S746 and S756. The segment covering P754 to T770 has biased composition (low complexity). Phosphothreonine is present on T762. Phosphoserine occurs at positions 767, 993, 997, and 1076. Disordered stretches follow at residues S1113–V1140 and F1185–S1220. A phosphoserine mark is found at S1196 and S1205. Acidic residues predominate over residues M1197–D1207. The segment covering A1208 to S1220 has biased composition (polar residues).

As to quaternary structure, binds VCP and the ternary complex containing STX5A, NSFL1C and VCP. Phosphorylated at Ser-1205 by ATM or ATR following induction of covalent DNA-protein cross-links (DPCs).

It is found in the nucleus. The protein localises to the cytoplasm. The protein resides in the endoplasmic reticulum. Its subcellular location is the golgi apparatus. It localises to the golgi stack. It catalyses the reaction Thiol-dependent hydrolysis of ester, thioester, amide, peptide and isopeptide bonds formed by the C-terminal Gly of ubiquitin (a 76-residue protein attached to proteins as an intracellular targeting signal).. Functionally, deubiquitinating enzyme involved in DNA repair and reassembly of the Golgi apparatus and the endoplasmic reticulum following mitosis. Necessary for VCP-mediated reassembly of Golgi stacks after mitosis. Plays a role in VCP-mediated formation of transitional endoplasmic reticulum (tER). Mediates dissociation of the ternary complex containing STX5A, NSFL1C and VCP. Also involved in DNA repair following phosphorylation by ATM or ATR: acts by catalyzing deubiquitination of SPRTN, thereby promoting SPRTN recruitment to chromatin and subsequent proteolytic cleavage of covalent DNA-protein cross-links (DPCs). Hydrolyzes 'Lys-11'- and 'Lys-48'-linked polyubiquitin chains. This chain is Deubiquitinating protein VCPIP1, found in Mus musculus (Mouse).